Here is a 144-residue protein sequence, read N- to C-terminus: Peptide methionine sulfoxide reductase MsrB (144 aa).

Residues 6-128 (KDELKKKLTP…NSAALRFIPK (123 aa)) enclose the MsrB domain. The active-site Nucleophile is the Cys117.

This sequence belongs to the MsrB Met sulfoxide reductase family.

It carries out the reaction L-methionyl-[protein] + [thioredoxin]-disulfide + H2O = L-methionyl-(R)-S-oxide-[protein] + [thioredoxin]-dithiol. This is Peptide methionine sulfoxide reductase MsrB from Shouchella clausii (strain KSM-K16) (Alkalihalobacillus clausii).